A 237-amino-acid polypeptide reads, in one-letter code: LexA repressor (237 aa).

Residues 1 to 12 are compositionally biased toward polar residues; sequence MPVKDSSSNKKN. Residues 1-20 form a disordered region; sequence MPVKDSSSNKKNQIGKLSER. The H-T-H motif DNA-binding region spans 41–61; the sequence is IREIGDAAGLQSTSSVAYQLK. A compositionally biased stretch (basic and acidic residues) spans 67-80; that stretch reads GYLRRDPNKPRAVD. A disordered region spans residues 67-112; that stretch reads GYLRRDPNKPRAVDVRALPDPIPSKPGRKPGPKKSSVAISPDPAET. Residues serine 161 and lysine 198 each act as for autocatalytic cleavage activity in the active site.

The protein belongs to the peptidase S24 family. As to quaternary structure, homodimer.

It catalyses the reaction Hydrolysis of Ala-|-Gly bond in repressor LexA.. Represses a number of genes involved in the response to DNA damage (SOS response), including recA and lexA. In the presence of single-stranded DNA, RecA interacts with LexA causing an autocatalytic cleavage which disrupts the DNA-binding part of LexA, leading to derepression of the SOS regulon and eventually DNA repair. This is LexA repressor from Corynebacterium diphtheriae (strain ATCC 700971 / NCTC 13129 / Biotype gravis).